The following is a 274-amino-acid chain: NAD(P)H-quinone oxidoreductase subunit K, chloroplastic (274 aa).

Polar residues-rich tracts occupy residues 1-10 (MVINQKNLSS) and 18-27 (SGSQSSTKAD). The tract at residues 1-27 (MVINQKNLSSPVAPYDKSGSQSSTKAD) is disordered. [4Fe-4S] cluster is bound by residues Cys-90, Cys-91, Cys-155, and Cys-186.

The protein belongs to the complex I 20 kDa subunit family. As to quaternary structure, NDH is composed of at least 16 different subunits, 5 of which are encoded in the nucleus. [4Fe-4S] cluster is required as a cofactor.

Its subcellular location is the plastid. The protein resides in the chloroplast thylakoid membrane. It carries out the reaction a plastoquinone + NADH + (n+1) H(+)(in) = a plastoquinol + NAD(+) + n H(+)(out). It catalyses the reaction a plastoquinone + NADPH + (n+1) H(+)(in) = a plastoquinol + NADP(+) + n H(+)(out). Its function is as follows. NDH shuttles electrons from NAD(P)H:plastoquinone, via FMN and iron-sulfur (Fe-S) centers, to quinones in the photosynthetic chain and possibly in a chloroplast respiratory chain. The immediate electron acceptor for the enzyme in this species is believed to be plastoquinone. Couples the redox reaction to proton translocation, and thus conserves the redox energy in a proton gradient. This Chlorokybus atmophyticus (Soil alga) protein is NAD(P)H-quinone oxidoreductase subunit K, chloroplastic.